We begin with the raw amino-acid sequence, 377 residues long: Protein-tyrosine sulfotransferase 2 (377 aa).

Topologically, residues 1–8 are cytoplasmic; the sequence is MRLSVRRV. A helical; Signal-anchor for type II membrane protein membrane pass occupies residues 9 to 25; it reads LLAAGCALVLVLAVQLG. At 26 to 377 the chain is on the lumenal side; the sequence is QQVLECRAVL…NSTSSHLGSS (352 aa). Residue 78-82 participates in 3'-phosphoadenylyl sulfate binding; it reads RSGTT. An intrachain disulfide couples Cys96 to Cys156. The active-site Proton donor/acceptor is Glu99. The interval 101 to 105 is interaction with peptide substrate; that stretch reads RIIPR. 3'-phosphoadenylyl sulfate is bound by residues Arg183, Ser191, and Arg195. Cysteines 225 and 233 form a disulfide. 3'-phosphoadenylyl sulfate is bound by residues Tyr238, 285–294, and Lys300; that span reads STDQVIKPVN. 2 N-linked (GlcNAc...) asparagine glycosylation sites follow: Asn343 and Asn368.

This sequence belongs to the protein sulfotransferase family. As to quaternary structure, homodimer. Can also form heterodimers with TPST1. N-glycosylated. As to expression, widely expressed.

It is found in the golgi apparatus membrane. The enzyme catalyses L-tyrosyl-[protein] + 3'-phosphoadenylyl sulfate = O-sulfo-L-tyrosine-[protein] + adenosine 3',5'-bisphosphate + H(+). Catalyzes the O-sulfation of tyrosine residues within acidic motifs of polypeptides, using 3'-phosphoadenylyl sulfate (PAPS) as cosubstrate. The chain is Protein-tyrosine sulfotransferase 2 (TPST2) from Homo sapiens (Human).